We begin with the raw amino-acid sequence, 130 residues long: Large ribosomal subunit protein bL20 (130 aa).

It belongs to the bacterial ribosomal protein bL20 family.

Binds directly to 23S ribosomal RNA and is necessary for the in vitro assembly process of the 50S ribosomal subunit. It is not involved in the protein synthesizing functions of that subunit. The protein is Large ribosomal subunit protein bL20 of Leifsonia xyli subsp. xyli (strain CTCB07).